The primary structure comprises 419 residues: Serine hydroxymethyltransferase (419 aa).

(6S)-5,6,7,8-tetrahydrofolate-binding positions include L121 and 125–127; that span reads GHL. Position 229 is an N6-(pyridoxal phosphate)lysine (K229). (6S)-5,6,7,8-tetrahydrofolate is bound at residue 354-356; that stretch reads SPF.

This sequence belongs to the SHMT family. Homodimer. Pyridoxal 5'-phosphate is required as a cofactor.

Its subcellular location is the cytoplasm. It carries out the reaction (6R)-5,10-methylene-5,6,7,8-tetrahydrofolate + glycine + H2O = (6S)-5,6,7,8-tetrahydrofolate + L-serine. Its pathway is one-carbon metabolism; tetrahydrofolate interconversion. It participates in amino-acid biosynthesis; glycine biosynthesis; glycine from L-serine: step 1/1. Its function is as follows. Catalyzes the reversible interconversion of serine and glycine with tetrahydrofolate (THF) serving as the one-carbon carrier. This reaction serves as the major source of one-carbon groups required for the biosynthesis of purines, thymidylate, methionine, and other important biomolecules. Also exhibits THF-independent aldolase activity toward beta-hydroxyamino acids, producing glycine and aldehydes, via a retro-aldol mechanism. This chain is Serine hydroxymethyltransferase, found in Coxiella burnetii (strain RSA 493 / Nine Mile phase I).